Consider the following 218-residue polypeptide: Sodium channel regulatory subunit beta-1 (218 aa).

The signal sequence occupies residues 1–18 (MGTLLAFVVGAALVSSAW). At 19 to 157 (GGCVEVDSET…DKANRDMASI (139 aa)) the chain is on the extracellular side. 2 disulfides stabilise this stretch: Cys21–Cys43 and Cys40–Cys121. The Ig-like C2-type domain occupies 22–150 (VEVDSETEAV…KIHLEVVDKA (129 aa)). Residues Asn93, Asn110, Asn114, and Asn135 are each glycosylated (N-linked (GlcNAc...) asparagine). A helical membrane pass occupies residues 158 to 179 (VSEIMMYVLIVVLTIWLVAEMV). At 180-218 (YCYKKIAAATEAAAQENASEYLAITSESKENCTGVQVAE) the chain is on the cytoplasmic side.

The protein belongs to the sodium channel auxiliary subunit SCN1B (TC 8.A.17) family. A voltage-gated sodium (Nav) channel consists of an ion-conducting pore-forming alpha subunit functional on its own that is regulated by one or more beta subunits. Interacts with SCN1A; regulatory subunit of SCN1A/Nav1.1. Interacts with SCN3A; regulatory subunit of SCN3A/Nav1.3. Interacts with SCN4A; regulatory subunit of SCN4A/Nav1.4. Interacts with SCN5A; regulatory subunit of SCN5A/Nav1.5. Interacts with SCN8A; regulatory subunit of SCN8A/Nav1.6. Interacts with SCN9A; regulatory subunit of SCN9A/Nav1.7. Interacts with SCN10A; regulatory subunit of SCN10A/Nav1.8. Interacts with NFASC. Interacts with TMEM65.

It localises to the cell membrane. The protein localises to the perikaryon. It is found in the cell projection. The protein resides in the axon. In terms of biological role, regulatory subunit of multiple voltage-gated sodium (Nav) channels directly mediating the depolarization of excitable membranes. Navs, also called VGSCs (voltage-gated sodium channels) or VDSCs (voltage-dependent sodium channels), operate by switching between closed and open conformations depending on the voltage difference across the membrane. In the open conformation they allow Na(+) ions to selectively pass through the pore, along their electrochemical gradient. The influx of Na+ ions provokes membrane depolarization, initiating the propagation of electrical signals throughout cells and tissues. The accessory beta subunits participate in localization and functional modulation of the Nav channels. Modulates the activity of SCN1A/Nav1.1, SCN2A/Nav1.2, SCN3A/Nav1.3, SCN4A/Nav1.4, SCN5A/Nav1.5, SCN8A/Nav1.6, SCN9A/Nav1.7 and SCN10A/Nav1.8. The protein is Sodium channel regulatory subunit beta-1 of Bos taurus (Bovine).